The sequence spans 163 residues: Nucleotide-binding protein ESA_02876 (163 aa).

The protein belongs to the YajQ family.

In terms of biological role, nucleotide-binding protein. The chain is Nucleotide-binding protein ESA_02876 from Cronobacter sakazakii (strain ATCC BAA-894) (Enterobacter sakazakii).